Reading from the N-terminus, the 73-residue chain is Putative beta-defensin 108A (73 aa).

The signal sequence occupies residues 1-22; the sequence is MRIAVLFFTIFFFMSQVLPAKG. 3 cysteine pairs are disulfide-bonded: cysteine 28-cysteine 55, cysteine 35-cysteine 49, and cysteine 39-cysteine 56.

It belongs to the beta-defensin family.

It is found in the secreted. Has antibacterial activity. This is Putative beta-defensin 108A from Homo sapiens (Human).